Here is a 284-residue protein sequence, read N- to C-terminus: Protein pxr1 (284 aa).

The region spanning 25-71 (TNRLGFKLLSSYGWVNGNGLGEKQHGRIHNIKVSLKDDTLGIGAKAT) is the G-patch domain. The tract at residues 149-253 (DEDRVCEDAS…KVKEGNRPAS (105 aa)) is disordered. A phosphoserine mark is found at S159 and S160. 2 stretches are compositionally biased toward basic residues: residues 166 to 181 (EKRK…KKKT) and 196 to 206 (TKKKKKEHKKK). Basic and acidic residues-rich tracts occupy residues 207–224 (DKES…DKEE) and 233–249 (KDKP…KEGN).

This sequence belongs to the PINX1 family.

It localises to the nucleus. Its subcellular location is the nucleolus. In terms of biological role, involved in rRNA-processing at A0, A1 and A2 sites and negatively regulates telomerase. The protein is Protein pxr1 (pxr1) of Schizosaccharomyces pombe (strain 972 / ATCC 24843) (Fission yeast).